The primary structure comprises 882 residues: Alanine--tRNA ligase (882 aa).

The Zn(2+) site is built by His-574, His-578, Cys-682, and His-686. Positions 853–882 (GGRGGGKGALAQGGGLDPRKAREALPGLLP) are disordered. The segment covering 854 to 868 (GRGGGKGALAQGGGL) has biased composition (gly residues).

Belongs to the class-II aminoacyl-tRNA synthetase family. Zn(2+) serves as cofactor.

The protein resides in the cytoplasm. It catalyses the reaction tRNA(Ala) + L-alanine + ATP = L-alanyl-tRNA(Ala) + AMP + diphosphate. Catalyzes the attachment of alanine to tRNA(Ala) in a two-step reaction: alanine is first activated by ATP to form Ala-AMP and then transferred to the acceptor end of tRNA(Ala). Also edits incorrectly charged Ser-tRNA(Ala) and Gly-tRNA(Ala) via its editing domain. This Thermus thermophilus (strain ATCC 27634 / DSM 579 / HB8) protein is Alanine--tRNA ligase.